A 152-amino-acid chain; its full sequence is Snaclec coagulation factor IX/factor X-binding protein subunit A (152 aa).

Positions 1–23 (MGRFIFMSFGLLVVAASLRGTGA) are cleaved as a signal peptide. In terms of domain architecture, C-type lectin spans 24–152 (DCLSGWSSYE…GQQNPFVCEA (129 aa)). Disulfide bonds link Cys25–Cys36, Cys53–Cys150, and Cys125–Cys142. Positions 64, 66, and 70 each coordinate Ca(2+). Glu151 is a Ca(2+) binding site.

This sequence belongs to the snaclec family. Heterodimer of subunits A and B; disulfide-linked. As to expression, expressed by the venom gland.

It is found in the secreted. Its function is as follows. Anticoagulant protein which binds to the gamma-carboxyglutamic acid-domain regions of factors IX (F9) and factor X (F10) in the presence of calcium with a 1 to 1 stoichiometry. The sequence is that of Snaclec coagulation factor IX/factor X-binding protein subunit A from Protobothrops flavoviridis (Habu).